Here is a 267-residue protein sequence, read N- to C-terminus: LexA repressor (267 aa).

The interval 1–44 (MSIDESSDNPTPRPKLGRPPKSEADKRAEKEAQKDGKKPALSTR) is disordered. The span at 20–38 (PKSEADKRAEKEAQKDGKK) shows a compositional bias: basic and acidic residues. A DNA-binding region (H-T-H motif) is located at residues 65–85 (IREIADAVGLHSTSSVSYHLT). Residues 111–140 (GQLTNESTKKNAGSPQPTSAAIPEPTTEGE) form a disordered region. Polar residues predominate over residues 112-129 (QLTNESTKKNAGSPQPTS). Catalysis depends on for autocatalytic cleavage activity residues serine 191 and lysine 228.

The protein belongs to the peptidase S24 family. In terms of assembly, homodimer.

The catalysed reaction is Hydrolysis of Ala-|-Gly bond in repressor LexA.. In terms of biological role, represses a number of genes involved in the response to DNA damage (SOS response), including recA and lexA. In the presence of single-stranded DNA, RecA interacts with LexA causing an autocatalytic cleavage which disrupts the DNA-binding part of LexA, leading to derepression of the SOS regulon and eventually DNA repair. The chain is LexA repressor from Corynebacterium jeikeium (strain K411).